A 1206-amino-acid chain; its full sequence is Phosphoglucan, water dikinase, chloroplastic (1206 aa).

Disordered regions lie at residues 1–20 and 52–71; these read MTSLRPLETSLSIGGRPRRG and RSAASAAERTKEKKRRDSSK. Residues 1–56 constitute a chloroplast transit peptide; it reads MTSLRPLETSLSIGGRPRRGLVLPPPGVGAGVLLRRGAMALPGRRGFACRGRSAAS. The 102-residue stretch at 67–168 folds into the CBM20 domain; that stretch reads RDSSKQPLVH…KFDIVCHWNR (102 aa). The active-site Tele-phosphohistidine intermediate is the H776.

The protein belongs to the PEP-utilizing enzyme family. As to quaternary structure, homodimer. Mg(2+) is required as a cofactor.

The protein resides in the plastid. Its subcellular location is the chloroplast. The enzyme catalyses [(1-&gt;4)-6-phospho-alpha-D-glucosyl](n) + n ATP + n H2O = [(1-&gt;4)-3,6-bisphospho-alpha-D-glucosyl](n) + n AMP + n phosphate + 2n H(+). Mediates the incorporation of phosphate into starch-like phospho-alpha-glucan, mostly at the C-3 position of glucose units. May be required for starch degradation, suggesting that the phosphate content of starch regulates its degradability. This chain is Phosphoglucan, water dikinase, chloroplastic (GWD3), found in Oryza sativa subsp. japonica (Rice).